We begin with the raw amino-acid sequence, 1050 residues long: Zinc finger and BTB domain-containing protein 11 (1050 aa).

Residues 143 to 156 (LDSGEESNESEDDL) show a composition bias toward acidic residues. Residues 143–173 (LDSGEESNESEDDLSNFTSPPSTASKSSKKK) form a disordered region. Low complexity predominate over residues 157-168 (SNFTSPPSTASK). The 69-residue stretch at 214–282 (CDVTLLIEGE…AYTSVLSFDF (69 aa)) folds into the BTB domain. Disordered regions lie at residues 373-514 (AEQN…EGGY) and 543-563 (LVQR…STEE). A compositionally biased stretch (low complexity) spans 378-399 (EPEQQPAPQASPEAEASVSPVE). Basic and acidic residues-rich tracts occupy residues 478 to 501 (SKDE…DTYR) and 553 to 563 (PKRDAKESTEE). 2 consecutive C2H2-type zinc fingers follow at residues 566–588 (HKCG…TLKH) and 594–616 (YKCP…LIRH). The tract at residues 617–641 (TRKEAPTSSSSNSTSTEASGGSSEK) is disordered. The segment covering 623–638 (TSSSSNSTSTEASGGS) has biased composition (low complexity). 10 consecutive C2H2-type zinc fingers follow at residues 648–670 (FICS…MLKH), 676–698 (HACQ…QSLH), 704–726 (FQCE…MSIH), 732–754 (YFCS…LKKH), 763–785 (YHCT…MNKH), 791–813 (FQCQ…VKSH), 819–843 (YRCN…KATH), 855–877 (RVCD…MNNH), 883–905 (FECL…VRTH), and 911–934 (YVCP…TKFH).

It localises to the nucleus. It is found in the nucleolus. May be involved in transcriptional regulation. The polypeptide is Zinc finger and BTB domain-containing protein 11 (Mus musculus (Mouse)).